A 480-amino-acid polypeptide reads, in one-letter code: ATP synthase subunit beta (480 aa).

ATP is bound at residue 158–165 (GGAGVGKT).

Belongs to the ATPase alpha/beta chains family. F-type ATPases have 2 components, CF(1) - the catalytic core - and CF(0) - the membrane proton channel. CF(1) has five subunits: alpha(3), beta(3), gamma(1), delta(1), epsilon(1). CF(0) has three main subunits: a(1), b(2) and c(9-12). The alpha and beta chains form an alternating ring which encloses part of the gamma chain. CF(1) is attached to CF(0) by a central stalk formed by the gamma and epsilon chains, while a peripheral stalk is formed by the delta and b chains.

It is found in the cell inner membrane. The enzyme catalyses ATP + H2O + 4 H(+)(in) = ADP + phosphate + 5 H(+)(out). Functionally, produces ATP from ADP in the presence of a proton gradient across the membrane. The catalytic sites are hosted primarily by the beta subunits. This Koribacter versatilis (strain Ellin345) protein is ATP synthase subunit beta.